A 429-amino-acid polypeptide reads, in one-letter code: UDP-N-acetylglucosamine 1-carboxyvinyltransferase (429 aa).

A phosphoenolpyruvate-binding site is contributed by 22–23 (KN). Arginine 102 lines the UDP-N-acetyl-alpha-D-glucosamine pocket. Cysteine 126 serves as the catalytic Proton donor. Cysteine 126 carries the 2-(S-cysteinyl)pyruvic acid O-phosphothioketal modification. UDP-N-acetyl-alpha-D-glucosamine contacts are provided by residues 131 to 135 (RPVDL), 171 to 174 (KVSV), aspartate 316, and isoleucine 338.

It belongs to the EPSP synthase family. MurA subfamily.

Its subcellular location is the cytoplasm. The enzyme catalyses phosphoenolpyruvate + UDP-N-acetyl-alpha-D-glucosamine = UDP-N-acetyl-3-O-(1-carboxyvinyl)-alpha-D-glucosamine + phosphate. It functions in the pathway cell wall biogenesis; peptidoglycan biosynthesis. Cell wall formation. Adds enolpyruvyl to UDP-N-acetylglucosamine. This is UDP-N-acetylglucosamine 1-carboxyvinyltransferase from Chelativorans sp. (strain BNC1).